A 345-amino-acid polypeptide reads, in one-letter code: MSVAVGIPYVCFFIILSVVGIIGNVIVIYAIAGDRNMRKSVMNILLLNLAVADLANLIFTIPEWIPPVFFGSTDWLFPSFLCPVCRYLECVFLFASISTQMIVCIERYIAIVLPMQARQLCSRRNVLITVLVDWIFVACFASPYAVWHSVKTKDRNTNSLRFKLFQLSATCSNTVGKSTWWQGYKLTEFLAFYFVPCFIITVVYTKVAKCLWCKDPTLQCETRSCLDNKSSSRSSDALRTRRNVVKMLIACVAVYFVCYSPIQVIFLSKAVLNVTIHPPYDFILLMNALAMTCSASNPLLYTLFSQKFRRRLRDVLYCPSDVENETKTYYSINNTSIVGPRASFN.

The Extracellular segment spans residues 1 to 11 (MSVAVGIPYVC). The chain crosses the membrane as a helical span at residues 12-32 (FFIILSVVGIIGNVIVIYAIA). The Cytoplasmic segment spans residues 33-40 (GDRNMRKS). A helical transmembrane segment spans residues 41-61 (VMNILLLNLAVADLANLIFTI). The Extracellular segment spans residues 62-90 (PEWIPPVFFGSTDWLFPSFLCPVCRYLEC). Cys82 and Cys171 are oxidised to a cystine. Residues 91–111 (VFLFASISTQMIVCIERYIAI) form a helical membrane-spanning segment. Residues 112–125 (VLPMQARQLCSRRN) lie on the Cytoplasmic side of the membrane. Residues 126–146 (VLITVLVDWIFVACFASPYAV) traverse the membrane as a helical segment. Over 147 to 187 (WHSVKTKDRNTNSLRFKLFQLSATCSNTVGKSTWWQGYKLT) the chain is Extracellular. A helical transmembrane segment spans residues 188–208 (EFLAFYFVPCFIITVVYTKVA). The Cytoplasmic segment spans residues 209-246 (KCLWCKDPTLQCETRSCLDNKSSSRSSDALRTRRNVVK). The helical transmembrane segment at 247 to 267 (MLIACVAVYFVCYSPIQVIFL) threads the bilayer. Residues 268-281 (SKAVLNVTIHPPYD) are Extracellular-facing. The helical transmembrane segment at 282 to 304 (FILLMNALAMTCSASNPLLYTLF) threads the bilayer. Over 305–345 (SQKFRRRLRDVLYCPSDVENETKTYYSINNTSIVGPRASFN) the chain is Cytoplasmic.

It belongs to the G-protein coupled receptor 1 family. As to expression, expressed in pharyngeal muscle and AWC, ASG, ASE, ASI, and ASJ sensory neurons. Expressed in ASI neuron. Expressed in AFD neurons and in AVK interneuron.

The protein resides in the cell membrane. Functionally, probable receptor for neuropeptide ligand nlp-8 that plays a role in octopamine signaling and specifically, the octopamine inhibition of aversion responses in olfactory sensory neurons. Plays a crucial role in daf-7 expression. Acts in concert with gpa-4 to activate TGF-beta-like daf-7 secretion in the ASI neuron, thereby promoting larval development and inhibition of dauer diapause. Suppresses immune response against pathogenic infection by inhibiting transcription regulators elt-2 and hlh-30 in ASJ neuron. Promotes pathogen avoidance behavior via intestinal gon-2, independent of aerotaxis. This is Neuropeptide receptor 15 (npr-15) from Caenorhabditis elegans.